Reading from the N-terminus, the 436-residue chain is Mannan endo-1,4-beta-mannosidase F (436 aa).

An N-terminal signal peptide occupies residues 1–18; that stretch reads MRSLSSVALLSAIGAASA. The region spanning 19 to 54 is the CBM1 domain; that stretch reads QAGPWGQCAGISHTGPTTCESGWSCVYLNDWYSQCQ. Positions 60-88 are disordered; sequence SSSTTVSSTKQPSSTVAAPSSTTSAHTLP. Residues 79-113 form a ser-rich linker region; it reads SSTTSAHTLPTGSGSFAKTDGLKFNIDGKTKYFAG. Residues 114–436 form a catalytic region; that stretch reads TNAYWLPFLT…CAVIDHISQI (323 aa). Substrate is bound by residues Trp-146 and Asn-260. Catalysis depends on Glu-261, which acts as the Proton donor. A substrate-binding site is contributed by Tyr-336. The active-site Nucleophile is the Glu-370. Trp-400 is a binding site for substrate.

This sequence belongs to the glycosyl hydrolase 5 (cellulase A) family.

Its subcellular location is the secreted. The catalysed reaction is Random hydrolysis of (1-&gt;4)-beta-D-mannosidic linkages in mannans, galactomannans and glucomannans.. Functionally, endo-1,4-mannanase, a crucial enzyme for depolymerization of seed galactomannans and wood galactoglucomannans. This Aspergillus clavatus (strain ATCC 1007 / CBS 513.65 / DSM 816 / NCTC 3887 / NRRL 1 / QM 1276 / 107) protein is Mannan endo-1,4-beta-mannosidase F (manF).